The primary structure comprises 1164 residues: FH1/FH2 domain-containing protein 1 (1164 aa).

Residues 53–458 (AQIPAVHRLL…AAETEKQVAL (406 aa)) enclose the GBD/FH3 domain. Disordered regions lie at residues 340 to 411 (DIEE…VGPP) and 470 to 500 (MPNEAGGHPDARQLWDSPETAPAARTPQSPA). A compositionally biased stretch (basic and acidic residues) spans 355–368 (KPSSEEGKRSRRSL). Phosphoserine is present on Ser-367. Over residues 402–411 (GPASSPVGPP) the composition is skewed to low complexity. Position 486 is a phosphoserine (Ser-486). The 129-residue stretch at 487–615 (PETAPAARTP…LAAPLPHSVP (129 aa)) folds into the FH1 domain. Phosphothreonine is present on Thr-495. 3 positions are modified to phosphoserine: Ser-498, Ser-523, and Ser-573. Residues 566-619 (GKDIPAPSPPLPLLSGVPPPPPLPPPPPIKGPFPPPPPLPLAAPLPHSVPDSSA) are disordered. A compositionally biased stretch (pro residues) spans 571–608 (APSPPLPLLSGVPPPPPLPPPPPIKGPFPPPPPLPLAA). An interaction with ROCK1 region spans residues 612–807 (HSVPDSSALP…AEPLFDLKVG (196 aa)). Residues 616–1013 (DSSALPTKRK…YRERNKTRGR (398 aa)) enclose the FH2 domain. At Thr-690 the chain carries Phosphothreonine. Residues 884 to 921 (LTRCAKVDFEQLTENLGQLERRSRAAEESLRSLAKHEL) are a coiled coil. The disordered stretch occupies residues 1020–1143 (KFSGVAGEAP…NRKSLRRTLK (124 aa)). A compositionally biased stretch (low complexity) spans 1028–1041 (APSNPSVPVAVSSG). The DAD domain occupies 1053-1133 (MKSLLTSRPE…AARERKRSRG (81 aa)). The span at 1073–1089 (MVQSSSPIMPTVGPSTA) shows a compositional bias: polar residues. Residues 1127-1142 (ERKRSRGNRKSLRRTL) are compositionally biased toward basic residues.

This sequence belongs to the formin homology family. In terms of assembly, self-associates via the FH2 domain. Binds to F-actin via its N-terminus. Binds to the cytoplasmic domain of CD21 via its C-terminus. Interacts with ROCK1 in a Src-dependent manner. In terms of processing, phosphorylated by ROCK1. In terms of tissue distribution, ubiquitous. Highly expressed in spleen.

The protein localises to the cytoplasm. Its subcellular location is the cytoskeleton. It is found in the cell projection. It localises to the bleb. In terms of biological role, required for the assembly of F-actin structures, such as stress fibers. Depends on the Rho-ROCK cascade for its activity. Contributes to the coordination of microtubules with actin fibers and plays a role in cell elongation. Acts synergistically with ROCK1 to promote SRC-dependent non-apoptotic plasma membrane blebbing. This chain is FH1/FH2 domain-containing protein 1 (FHOD1), found in Homo sapiens (Human).